The following is a 162-amino-acid chain: Peptidyl-prolyl cis-trans isomerase-like 1 (162 aa).

The PPIase cyclophilin-type domain occupies 1 to 155 (MATDVTFDTS…DEVKILRAKV (155 aa)).

Belongs to the cyclophilin-type PPIase family. PPIL1 subfamily.

It carries out the reaction [protein]-peptidylproline (omega=180) = [protein]-peptidylproline (omega=0). Its function is as follows. PPIases accelerate the folding of proteins. It catalyzes the cis-trans isomerization of proline imidic peptide bonds in oligopeptides. This chain is Peptidyl-prolyl cis-trans isomerase-like 1 (cyp1), found in Emericella nidulans (strain FGSC A4 / ATCC 38163 / CBS 112.46 / NRRL 194 / M139) (Aspergillus nidulans).